The chain runs to 1241 residues: ATP-dependent helicase/nuclease subunit A (1241 aa).

A UvrD-like helicase ATP-binding domain is found at 12 to 485; sequence SQWTDDQWKA…IDLAKNFRSR (474 aa). An ATP-binding site is contributed by 33–40; that stretch reads AAAGSGKT. In terms of domain architecture, UvrD-like helicase C-terminal spans 505–805; it reads GEIDYDADAE…RIMTIHKSKG (301 aa).

Belongs to the helicase family. AddA subfamily. Heterodimer of AddA and AddB/RexB. Mg(2+) is required as a cofactor.

It catalyses the reaction Couples ATP hydrolysis with the unwinding of duplex DNA by translocating in the 3'-5' direction.. It carries out the reaction ATP + H2O = ADP + phosphate + H(+). Its function is as follows. The heterodimer acts as both an ATP-dependent DNA helicase and an ATP-dependent, dual-direction single-stranded exonuclease. Recognizes the chi site generating a DNA molecule suitable for the initiation of homologous recombination. The AddA nuclease domain is required for chi fragment generation; this subunit has the helicase and 3' -&gt; 5' nuclease activities. The sequence is that of ATP-dependent helicase/nuclease subunit A from Bacillus cereus (strain G9842).